The primary structure comprises 104 residues: Large ribosomal subunit protein bL21 (104 aa).

This sequence belongs to the bacterial ribosomal protein bL21 family. In terms of assembly, part of the 50S ribosomal subunit. Contacts protein L20.

Functionally, this protein binds to 23S rRNA in the presence of protein L20. This is Large ribosomal subunit protein bL21 from Endomicrobium trichonymphae.